Consider the following 701-residue polypeptide: Polyribonucleotide nucleotidyltransferase (701 aa).

Mg(2+) contacts are provided by Asp487 and Asp493. In terms of domain architecture, KH spans 554-613 (PTMIAMKIDTDKIRDVIGKGGATIRAICEETKASIDIEDDGSIKIFGESKEAAEAARQRV). Positions 623–691 (GKIYLGKVER…NRGRIKLSIK (69 aa)) constitute an S1 motif domain.

Belongs to the polyribonucleotide nucleotidyltransferase family. As to quaternary structure, component of the RNA degradosome, which is a multiprotein complex involved in RNA processing and mRNA degradation. Mg(2+) serves as cofactor.

Its subcellular location is the cytoplasm. The catalysed reaction is RNA(n+1) + phosphate = RNA(n) + a ribonucleoside 5'-diphosphate. In terms of biological role, involved in mRNA degradation. Catalyzes the phosphorolysis of single-stranded polyribonucleotides processively in the 3'- to 5'-direction. This chain is Polyribonucleotide nucleotidyltransferase, found in Pseudomonas syringae pv. tomato (strain ATCC BAA-871 / DC3000).